The chain runs to 488 residues: MAYSQGGGKKKVCYYYDGDIGNYYYGQGHPMKPHRIRMTHNLLLNYGLYRKMEIYRPHKATAEEMTKYHSDEYIKFLRSIRPDNMSEYSKQMQRFNVGEDCPVFDGLFEFCQLSTGGSVAGAVKLNRQQTDMAVNWAGGLHHAKKSEASGFCYVNDIVLAILELLKYHQRVLYIDIDIHHGDGVEEAFYTTDRVMTVSFHKYGEYFPGTGDLRDIGAGKGKYYAVNFPMRDGIDDESYGQIFKPIISKVMEMYQPSAVVLQCGADSLSGDRLGCFNLTVKGHAKCVEVVKTFNLPLLMLGGGGYTIRNVARCWTYETAVALDCEIPNELPYNDYFEYFGPDFKLHISPSNMTNQNTPEYMEKIKQRLFENLRMLPHAPGVQMQAIPEDAVHEDSGDEDGEDPDKRISIRASDKRIACDEEFSDSEDEGEGGRRNVADHKKGAKKARIEEDKKETEDKKTDVKEEDKSKDNSGEKTDTKGTKSEQLSNP.

Residues Lys9–Asp322 are histone deacetylase. Positions 28 and 32 each coordinate 1D-myo-inositol 1,4,5,6-tetrakisphosphate. Lys75 carries the N6-acetyllysine; alternate modification. Lys75 participates in a covalent cross-link: Glycyl lysine isopeptide (Lys-Gly) (interchain with G-Cter in SUMO2); alternate. Residue His142 is part of the active site. Ca(2+) is bound by residues Asp175, Asp177, His179, Phe188, Thr191, Val194, Ser198, and Phe199. Residues Asp177 and His179 each contribute to the Zn(2+) site. N6-acetyllysine is present on Lys221. Tyr223 is a binding site for Ca(2+). Residue Cys262 is modified to S-nitrosocysteine. Asp265 provides a ligand contact to Zn(2+). Arg271 lines the 1D-myo-inositol 1,4,5,6-tetrakisphosphate pocket. Cys274 is subject to S-nitrosocysteine. The interval Ala389–Pro488 is disordered. Phosphoserine is present on residues Ser394, Ser407, Ser422, and Ser424. A compositionally biased stretch (basic and acidic residues) spans Pro402 to Cys417. A compositionally biased stretch (acidic residues) spans Asp418–Gly428. Over residues Glu429–Lys481 the composition is skewed to basic and acidic residues. Glycyl lysine isopeptide (Lys-Gly) (interchain with G-Cter in SUMO2) cross-links involve residues Lys439, Lys452, Lys458, Lys462, Lys478, and Lys481.

It belongs to the histone deacetylase family. HD type 1 subfamily. Part of the core histone deacetylase (HDAC) complex composed of HDAC1, HDAC2, RBBP4 and RBBP7, the core complex associates with SIN3, SAP18 and SAP30 to form the SIN3 HDAC complex. Component of the nucleosome remodeling and deacetylase (NuRD) repressor complex, composed of core proteins MTA1, MTA2, MTA3, RBBP4, RBBP7, HDAC1, HDAC2, MBD2, MBD3, and peripherally associated proteins CDK2AP1, CDK2AP2, GATAD2A, GATAD2B, CHD3, CHD4 and CHD5. The exact stoichiometry of the NuRD complex is unknown, and some subunits such as MBD2 and MBD3, GATAD2A and GATAD2B, and CHD3, CHD4 and CHD5 define mutually exclusive NuRD complexes. Component of a RCOR/GFI/KDM1A/HDAC complex. Component of a BHC histone deacetylase complex that contains HDAC1, HDAC2, HMG20B, KDM1A, RCOR1 and PHF21A. The BHC complex may also contain ZMYM2, ZNF217, ZMYM3, GSE1 and GTF2I. Part of a complex containing the core histones H2A, H2B, H3 and H4, DEK and unphosphorylated DAXX. Part of a complex containing ATR and CHD4. Forms a heterologous complex at least with YY1. Interacts in the late S-phase of DNA-replication with DNMT1 in the other transcriptional repressor complex composed of DNMT1, DMAP1, PCNA, CAF1. Component of a mSin3A corepressor complex that contains SIN3A, SAP130, SUDS3, ARID4B, HDAC1 and HDAC2. Part of a complex composed of TRIM28, HDAC1, HDAC2 and EHMT2. Part of a complex containing at least CDYL, MIER1, MIER2, HDAC1 and HDAC2. Component of a histone deacetylase complex containing DNTTIP1, ZNF541, HDAC1 and HDAC2. Forms a complex comprising APPL1, RUVBL2, APPL2, CTNNB1 and HDAC1. Interacts directly with GFI1. Interacts directly with GFI1B. Interacts with APEX1; the interaction is not dependent on the acetylated status of APEX1. Interacts with ATR. Interacts with BCL6 (non-acetylated form). Interacts with BEND3. Interacts with CBFA2T3. Interacts with CDK2AP1. Interacts with CHD4. Interacts with CHD5. Interacts with CHFR. Interacts with CRY1. Interacts with DNMT1. Interacts with GATAD2A. Interacts with HCFC1. Interacts with HDAC7. Interacts with HDAC10. Interacts with INSM1. Interacts with KDM4A. Interacts with MACROH2A1 (via the non-histone region). Interacts with MBD3L2. Interacts with MTA1, with a preference for sumoylated MTA1. Interacts with NACC2. Interacts with NRIP1. Interacts with PELP1. Interacts with PIMREG. Interacts with PRDM6. Interacts with PWWP2B. Interacts with SAP30. Interacts with SAP30L. Interacts with SETDB1. Interacts with SIX3. Interacts with SMARCAD1. Interacts with SNW1. Interacts with SPHK2. Interacts with SPEN/MINT. Interacts (CK2 phosphorylated form) with SP3. Interacts with SUV39H1. Interacts with TSHZ3 (via its N-terminus). Interacts with ZMYND8. Interacts with ZNF431. Interacts with ZNF263; recruited to the SIX3 promoter along with other proteins involved in chromatin modification and transcriptional corepression where it contributes to transcriptional repression. Identified in a complex with HDAC1, KCTD19, DNTTIP1 and ZNF541. Component of the SIN3B complex, which includes SIN3B, HDAC2, PHF12 and MORF4L1; interacts directly with all subunits. It depends on Zn(2+) as a cofactor. Requires Ca(2+) as cofactor. S-nitrosylated by GAPDH. In neurons, S-nitrosylation at Cys-262 and Cys-274 does not affect enzyme activity, but induces HDAC2 release from chromatin. This in turn increases acetylation of histones surrounding neurotrophin-dependent gene promoters and promotes their transcription. In embryonic cortical neurons, S-Nitrosylation regulates dendritic growth and branching. As to expression, widely expressed; lower levels in brain and lung.

It localises to the nucleus. It is found in the cytoplasm. It catalyses the reaction N(6)-acetyl-L-lysyl-[histone] + H2O = L-lysyl-[histone] + acetate. The enzyme catalyses N(6)-acetyl-L-lysyl-[protein] + H2O = L-lysyl-[protein] + acetate. The catalysed reaction is N(6)-(2E)-butenoyl-L-lysyl-[protein] + H2O = (2E)-2-butenoate + L-lysyl-[protein]. It carries out the reaction N(6)-(2-hydroxyisobutanoyl)-L-lysyl-[protein] + H2O = 2-hydroxy-2-methylpropanoate + L-lysyl-[protein]. It catalyses the reaction N(6)-[(S)-lactoyl]-L-lysyl-[protein] + H2O = (S)-lactate + L-lysyl-[protein]. Its activity is regulated as follows. Inositol tetraphosphate (1D-myo-inositol 1,4,5,6-tetrakisphosphate) may act as an intermolecular glue between HDAC2 and N-Cor repressor complex components. Histone deacetylase that catalyzes the deacetylation of lysine residues on the N-terminal part of the core histones (H2A, H2B, H3 and H4). Histone deacetylation gives a tag for epigenetic repression and plays an important role in transcriptional regulation, cell cycle progression and developmental events. Histone deacetylases act via the formation of large multiprotein complexes. Forms transcriptional repressor complexes by associating with MAD, SIN3, YY1 and N-COR. Component of a RCOR/GFI/KDM1A/HDAC complex that suppresses, via histone deacetylase (HDAC) recruitment, a number of genes implicated in multilineage blood cell development. Acts as a component of the histone deacetylase NuRD complex which participates in the remodeling of chromatin. Component of the SIN3B complex that represses transcription and counteracts the histone acetyltransferase activity of EP300 through the recognition H3K27ac marks by PHF12 and the activity of the histone deacetylase HDAC2. Also deacetylates non-histone targets: deacetylates TSHZ3, thereby regulating its transcriptional repressor activity. May be involved in the transcriptional repression of circadian target genes, such as PER1, mediated by CRY1 through histone deacetylation. Involved in MTA1-mediated transcriptional corepression of TFF1 and CDKN1A. In addition to protein deacetylase activity, also acts as a protein-lysine deacylase by recognizing other acyl groups: catalyzes removal of (2E)-butenoyl (crotonyl), lactoyl (lactyl) and 2-hydroxyisobutanoyl (2-hydroxyisobutyryl) acyl groups from lysine residues, leading to protein decrotonylation, delactylation and de-2-hydroxyisobutyrylation, respectively. This is Histone deacetylase 2 from Homo sapiens (Human).